The sequence spans 276 residues: NADPH-dependent 7-cyano-7-deazaguanine reductase (276 aa).

83-85 (IES) is a binding site for substrate. An NADPH-binding site is contributed by 85 to 86 (SK). The Thioimide intermediate role is filled by Cys-184. Asp-191 functions as the Proton donor in the catalytic mechanism. A substrate-binding site is contributed by 223 to 224 (HE). 252–253 (RG) serves as a coordination point for NADPH.

This sequence belongs to the GTP cyclohydrolase I family. QueF type 2 subfamily. Homodimer.

Its subcellular location is the cytoplasm. The catalysed reaction is 7-aminomethyl-7-carbaguanine + 2 NADP(+) = 7-cyano-7-deazaguanine + 2 NADPH + 3 H(+). Its pathway is tRNA modification; tRNA-queuosine biosynthesis. In terms of biological role, catalyzes the NADPH-dependent reduction of 7-cyano-7-deazaguanine (preQ0) to 7-aminomethyl-7-deazaguanine (preQ1). The sequence is that of NADPH-dependent 7-cyano-7-deazaguanine reductase from Pseudomonas aeruginosa (strain LESB58).